The primary structure comprises 436 residues: 3-ketoacyl-CoA thiolase (436 aa).

C99 functions as the Acyl-thioester intermediate in the catalytic mechanism. Residues H392 and C422 each act as proton acceptor in the active site.

Belongs to the thiolase-like superfamily. Thiolase family. Heterotetramer of two alpha chains (FadJ) and two beta chains (FadI).

It localises to the cytoplasm. It carries out the reaction an acyl-CoA + acetyl-CoA = a 3-oxoacyl-CoA + CoA. It participates in lipid metabolism; fatty acid beta-oxidation. Catalyzes the final step of fatty acid oxidation in which acetyl-CoA is released and the CoA ester of a fatty acid two carbons shorter is formed. The chain is 3-ketoacyl-CoA thiolase from Shewanella pealeana (strain ATCC 700345 / ANG-SQ1).